The chain runs to 419 residues: Protein FAM181B (419 aa).

Residues 107–157 (LMGAAPPGPSSPGAADTPAKRPLAGAQTVPVPVPAHGKAAPRREASQAAAA) form a disordered region.

This sequence belongs to the FAM181 family.

The sequence is that of Protein FAM181B (FAM181B) from Bos taurus (Bovine).